The chain runs to 576 residues: F-actin capping regulator BSP1 (576 aa).

A disordered region spans residues 24–50; sequence RYSNIPSSKPAGEALSPVRSHNSGEYR. 3 positions are modified to phosphoserine: Ser-46, Ser-79, and Ser-88. Disordered stretches follow at residues 132 to 160 and 173 to 316; these read NDSN…PREK and GRAD…KRIP. Residue Ser-185 is modified to Phosphoserine. Over residues 191 to 206 the composition is skewed to basic and acidic residues; it reads TRRDHIKITDGNEEKP. Residue Ser-220 is modified to Phosphoserine. Composition is skewed to polar residues over residues 243–255 and 264–279; these read SRST…LSSL and KSYN…TVKS. The span at 304 to 313 shows a compositional bias: pro residues; sequence KPTPPSPPAK. Ser-309 and Ser-320 each carry phosphoserine. The segment at 408–470 is interaction with F-actin; it reads SIPEAIKGIQ…LSLRNNLKKR (63 aa). A disordered region spans residues 541 to 576; the sequence is DKYTTSRDETVKETKPLVHPNKNRTRGPRRKLPTRV. Residues 544-556 show a composition bias toward basic and acidic residues; that stretch reads TTSRDETVKETKP. The tract at residues 547–576 is interaction with the F-actin capping complex; it reads RDETVKETKPLVHPNKNRTRGPRRKLPTRV. Residues 561–576 show a composition bias toward basic residues; it reads NKNRTRGPRRKLPTRV.

In terms of assembly, interacts (via C-terminus) with the CAP1-CAP2 F-actin capping protein complex. Interacts with INP52 (via SAC domain); the interaction is direct. Interacts with INP53 (via SAC domain); the interaction is direct. Interacts with RVS167. Interacts with SLA1. In terms of processing, phosphorylated by CDC28.

It is found in the cytoplasm. It localises to the cytoskeleton. Its subcellular location is the actin patch. The protein resides in the cell membrane. In terms of biological role, recruits the capping protein complex to actin patches and the actomyosin contractile ring, and/or stabilizes their interaction. May serve as an adapter to link INP52 and INP53 to the cortical actin cytoskeleton. Binds F-actin. This chain is F-actin capping regulator BSP1 (BSP1), found in Saccharomyces cerevisiae (strain ATCC 204508 / S288c) (Baker's yeast).